The chain runs to 100 residues: Small ribosomal subunit protein bS6 (100 aa).

Belongs to the bacterial ribosomal protein bS6 family.

Its function is as follows. Binds together with bS18 to 16S ribosomal RNA. This chain is Small ribosomal subunit protein bS6, found in Tropheryma whipplei (strain TW08/27) (Whipple's bacillus).